A 432-amino-acid chain; its full sequence is Sensor histidine kinase YrkQ (432 aa).

Over 1–12 the chain is Cytoplasmic; it reads MAHLKFTLTKKL. Residues 13 to 33 form a helical membrane-spanning segment; that stretch reads ALLIMVAAIVSGVIFLTLQKI. Residues 34–145 lie on the Extracellular side of the membrane; the sequence is TDDLIEGYLS…GFYSSRYYDL (112 aa). A helical transmembrane segment spans residues 146 to 166; sequence AFALDLLGATLIFLIIVLFGI. The HAMP domain maps to 167 to 219; the sequence is RQSLRYLKTIHQEIHILEGGELDYEMTIKGHDELAMIAKSIEDLRKAFLDKLK. Over 167–432 the chain is Cytoplasmic; it reads RQSLRYLKTI…IVLRFWNTKM (266 aa). A Histidine kinase domain is found at 234-432; that stretch reads EMSHDMRTPL…IVLRFWNTKM (199 aa). Position 237 is a phosphohistidine; by autocatalysis (His237).

The protein localises to the cell membrane. It catalyses the reaction ATP + protein L-histidine = ADP + protein N-phospho-L-histidine.. Functionally, member of the two-component regulatory system YrkQ/YrkP. Probably activates YrkP by phosphorylation. The protein is Sensor histidine kinase YrkQ (yrkQ) of Bacillus subtilis (strain 168).